Reading from the N-terminus, the 150-residue chain is Large ribosomal subunit protein bL9 (150 aa).

Belongs to the bacterial ribosomal protein bL9 family.

Its function is as follows. Binds to the 23S rRNA. The polypeptide is Large ribosomal subunit protein bL9 (Neisseria meningitidis serogroup B (strain ATCC BAA-335 / MC58)).